Reading from the N-terminus, the 121-residue chain is UPF0102 protein BDI_2565 (121 aa).

It belongs to the UPF0102 family.

The chain is UPF0102 protein BDI_2565 from Parabacteroides distasonis (strain ATCC 8503 / DSM 20701 / CIP 104284 / JCM 5825 / NCTC 11152).